The chain runs to 244 residues: 1-(5-phosphoribosyl)-5-[(5-phosphoribosylamino)methylideneamino] imidazole-4-carboxamide isomerase (244 aa).

The active-site Proton acceptor is D10. Catalysis depends on D129, which acts as the Proton donor.

The protein belongs to the HisA/HisF family.

Its subcellular location is the cytoplasm. It carries out the reaction 1-(5-phospho-beta-D-ribosyl)-5-[(5-phospho-beta-D-ribosylamino)methylideneamino]imidazole-4-carboxamide = 5-[(5-phospho-1-deoxy-D-ribulos-1-ylimino)methylamino]-1-(5-phospho-beta-D-ribosyl)imidazole-4-carboxamide. It participates in amino-acid biosynthesis; L-histidine biosynthesis; L-histidine from 5-phospho-alpha-D-ribose 1-diphosphate: step 4/9. The sequence is that of 1-(5-phosphoribosyl)-5-[(5-phosphoribosylamino)methylideneamino] imidazole-4-carboxamide isomerase from Rhodococcus erythropolis (strain PR4 / NBRC 100887).